The following is a 90-amino-acid chain: Protein RALF-like 3 (90 aa).

The signal sequence occupies residues 1–29; sequence MSNLRGTNRFILVAVLVSFVFLSIMNAEA. 2 disulfides stabilise this stretch: C59–C67 and C80–C86.

Belongs to the plant rapid alkalinization factor (RALF) family.

The protein resides in the secreted. Functionally, cell signaling peptide that may regulate plant stress, growth, and development. Mediates a rapid alkalinization of extracellular space by mediating a transient increase in the cytoplasmic Ca(2+) concentration leading to a calcium-dependent signaling events through a cell surface receptor and a concomitant activation of some intracellular mitogen-activated protein kinases. This Arabidopsis thaliana (Mouse-ear cress) protein is Protein RALF-like 3 (RALFL3).